Reading from the N-terminus, the 100-residue chain is MKVTDVRLRKIQTDGRMKALVSITLDEAFVIHDLRVIEGNSGLFVAMPSKRTPDGEFRDIAHPINSDMRQEIQDAVMKVYDETDEVVPDKNATSEDSEEA.

The protein belongs to the SpoVG family.

Could be involved in septation. The polypeptide is Putative septation protein SpoVG (Staphylococcus aureus (strain JH1)).